A 383-amino-acid polypeptide reads, in one-letter code: Erythronate-4-phosphate dehydrogenase (383 aa).

Residues Ser45 and Thr67 each contribute to the substrate site. Asp147 contributes to the NAD(+) binding site. Arg208 is an active-site residue. Residue Asp232 coordinates NAD(+). Glu237 is an active-site residue. His254 serves as the catalytic Proton donor. Gly257 provides a ligand contact to NAD(+). Tyr258 lines the substrate pocket.

The protein belongs to the D-isomer specific 2-hydroxyacid dehydrogenase family. PdxB subfamily. In terms of assembly, homodimer.

It localises to the cytoplasm. The enzyme catalyses 4-phospho-D-erythronate + NAD(+) = (R)-3-hydroxy-2-oxo-4-phosphooxybutanoate + NADH + H(+). Its pathway is cofactor biosynthesis; pyridoxine 5'-phosphate biosynthesis; pyridoxine 5'-phosphate from D-erythrose 4-phosphate: step 2/5. Catalyzes the oxidation of erythronate-4-phosphate to 3-hydroxy-2-oxo-4-phosphonooxybutanoate. This chain is Erythronate-4-phosphate dehydrogenase, found in Psychromonas ingrahamii (strain DSM 17664 / CCUG 51855 / 37).